The following is a 128-amino-acid chain: Large ribosomal subunit protein eL32 (128 aa).

The protein belongs to the eukaryotic ribosomal protein eL32 family.

This chain is Large ribosomal subunit protein eL32 (rpl32e), found in Thermoplasma volcanium (strain ATCC 51530 / DSM 4299 / JCM 9571 / NBRC 15438 / GSS1).